The primary structure comprises 406 residues: Phosphopentomutase (406 aa).

Mn(2+)-binding residues include aspartate 10, aspartate 305, histidine 310, aspartate 346, histidine 347, and histidine 358.

Belongs to the phosphopentomutase family. The cofactor is Mn(2+).

The protein localises to the cytoplasm. The enzyme catalyses 2-deoxy-alpha-D-ribose 1-phosphate = 2-deoxy-D-ribose 5-phosphate. The catalysed reaction is alpha-D-ribose 1-phosphate = D-ribose 5-phosphate. It participates in carbohydrate degradation; 2-deoxy-D-ribose 1-phosphate degradation; D-glyceraldehyde 3-phosphate and acetaldehyde from 2-deoxy-alpha-D-ribose 1-phosphate: step 1/2. Its function is as follows. Isomerase that catalyzes the conversion of deoxy-ribose 1-phosphate (dRib-1-P) and ribose 1-phosphate (Rib-1-P) to deoxy-ribose 5-phosphate (dRib-5-P) and ribose 5-phosphate (Rib-5-P), respectively. This chain is Phosphopentomutase, found in Allorhizobium ampelinum (strain ATCC BAA-846 / DSM 112012 / S4) (Agrobacterium vitis (strain S4)).